The primary structure comprises 232 residues: MDLNTQRSKLYAQLQGQLIVSVQAPDGHAMRDTHTLTHVAAACVDGGAPAIRCGGYGGLEDIRSISNRVDVPVFGLTKEGSEGVYITPTRDSVRAVAESGATVVCADATFRPRPDGSTFAELVTVAHDSGILIMADCATPEEVLSAHKAGADFVSTTLAGYTEHREKTVGPDFDCLREARELVPDAFLIGEGRFSNPADVAHGRLIGANAIIVGTAITDPGFITGQFASLLH.

It belongs to the NanE family.

The catalysed reaction is an N-acyl-D-glucosamine 6-phosphate = an N-acyl-D-mannosamine 6-phosphate. The protein operates within amino-sugar metabolism; N-acetylneuraminate degradation; D-fructose 6-phosphate from N-acetylneuraminate: step 3/5. In terms of biological role, converts N-acetylmannosamine-6-phosphate (ManNAc-6-P) to N-acetylglucosamine-6-phosphate (GlcNAc-6-P). The polypeptide is Putative N-acetylmannosamine-6-phosphate 2-epimerase (Corynebacterium glutamicum (strain R)).